Consider the following 200-residue polypeptide: Small ribosomal subunit protein uS4 (200 aa).

The segment at 22–42 is disordered; sequence TGKELEKRPYAPGPHGPNQRK. Positions 92–152 constitute an S4 RNA-binding domain; it reads ARLDNLVYRM…EKSNSLVVVK (61 aa).

Belongs to the universal ribosomal protein uS4 family. Part of the 30S ribosomal subunit. Contacts protein S5. The interaction surface between S4 and S5 is involved in control of translational fidelity.

Functionally, one of the primary rRNA binding proteins, it binds directly to 16S rRNA where it nucleates assembly of the body of the 30S subunit. Its function is as follows. With S5 and S12 plays an important role in translational accuracy. This chain is Small ribosomal subunit protein uS4, found in Bacillus cereus (strain B4264).